Reading from the N-terminus, the 278-residue chain is Hydroxyethylthiazole kinase (278 aa).

M48 contributes to the substrate binding site. ATP is bound by residues R124 and T175. Residue G202 coordinates substrate.

This sequence belongs to the Thz kinase family. Mg(2+) serves as cofactor.

It catalyses the reaction 5-(2-hydroxyethyl)-4-methylthiazole + ATP = 4-methyl-5-(2-phosphooxyethyl)-thiazole + ADP + H(+). It participates in cofactor biosynthesis; thiamine diphosphate biosynthesis; 4-methyl-5-(2-phosphoethyl)-thiazole from 5-(2-hydroxyethyl)-4-methylthiazole: step 1/1. Catalyzes the phosphorylation of the hydroxyl group of 4-methyl-5-beta-hydroxyethylthiazole (THZ). This is Hydroxyethylthiazole kinase from Clostridium botulinum (strain Alaska E43 / Type E3).